A 198-amino-acid chain; its full sequence is MEHYISLFVRAVFIENMALAFFLGMCTFLAVSKNVKTAFGLGIAVTVVLGLSVPLNNLVYNYVLRANALMEGVDLSFLNFITFIGVIAALVQILEMILDRYFPSLYNALGIFLPLITVNCAIFGGVSFMAQRDYNFSESIVYGFGSGIGWMLAIVLLASIREKMKYADVPSGMKGLGVTFVTTGLMALGFMSFSGVQL.

The next 6 helical transmembrane spans lie at 11 to 31, 39 to 59, 77 to 97, 109 to 129, 140 to 160, and 176 to 196; these read AVFIENMALAFFLGMCTFLAV, FGLGIAVTVVLGLSVPLNNLV, FLNFITFIGVIAALVQILEMI, LGIFLPLITVNCAIFGGVSFM, IVYGFGSGIGWMLAIVLLASI, and LGVTFVTTGLMALGFMSFSGV.

The protein belongs to the NqrDE/RnfAE family. As to quaternary structure, composed of six subunits; NqrA, NqrB, NqrC, NqrD, NqrE and NqrF.

The protein resides in the cell inner membrane. It catalyses the reaction a ubiquinone + n Na(+)(in) + NADH + H(+) = a ubiquinol + n Na(+)(out) + NAD(+). In terms of biological role, NQR complex catalyzes the reduction of ubiquinone-1 to ubiquinol by two successive reactions, coupled with the transport of Na(+) ions from the cytoplasm to the periplasm. NqrA to NqrE are probably involved in the second step, the conversion of ubisemiquinone to ubiquinol. This chain is Na(+)-translocating NADH-quinone reductase subunit E, found in Proteus mirabilis (strain HI4320).